The sequence spans 310 residues: MPLNLQKNLPAIELLKKEHIFVMDSLRASEQDIRPLRVVVLNLMPLKITTETDLVRLLSNTPLQVELDFMKIKGHTPKNTPIEHMQEFYKDFDEMADDFYDGMIVTGAPVEQMPFEEVSYWEEITQIFDWARTHVTSTLYICWAAQAGLYHFYGVPKYDLPAKMFGVFRHSLREPFVPIFRGFDDEFFVPHSRHTEIRREDIMKVPELTLLSESEESGVYMAMARGGREFFITGHSEYSPYTLNDEYMRDLGKGLPINKPRNYYRNNDPAQGPVVRWRGHANLLFTNWLNYYVYQETPFRREDIKKLGSL.

Cys-142 serves as the catalytic Acyl-thioester intermediate. 2 residues coordinate substrate: Lys-163 and Ser-192. Catalysis depends on His-235, which acts as the Proton acceptor. Glu-237 is a catalytic residue. Substrate is bound at residue Arg-249.

This sequence belongs to the MetA family.

It localises to the cytoplasm. It carries out the reaction L-homoserine + acetyl-CoA = O-acetyl-L-homoserine + CoA. Its pathway is amino-acid biosynthesis; L-methionine biosynthesis via de novo pathway; O-acetyl-L-homoserine from L-homoserine: step 1/1. In terms of biological role, transfers an acetyl group from acetyl-CoA to L-homoserine, forming acetyl-L-homoserine. The sequence is that of Homoserine O-acetyltransferase from Parabacteroides distasonis (strain ATCC 8503 / DSM 20701 / CIP 104284 / JCM 5825 / NCTC 11152).